The chain runs to 128 residues: Saitohin (128 aa).

Positions 77-87 (SYSSEENSRNG) are enriched in polar residues. The tract at residues 77 to 128 (SYSSEENSRNGAEQGRQLSIEGPFQGQNCPSHPAAALPLPMRGESQATSCQV) is disordered.

Interacts with PRDX6.

The protein localises to the cytoplasm. The protein resides in the nucleus. This chain is Saitohin (STH), found in Pan troglodytes (Chimpanzee).